Reading from the N-terminus, the 64-residue chain is Basic secretory protease (64 aa).

Requires a divalent metal cation as cofactor. Post-translationally, glycosylated.

Its activity is regulated as follows. Inhibited by EDTA. In terms of biological role, metalloprotease, digests gelatin and azocasein (in vitro). The protein is Basic secretory protease of Boswellia serrata (Indian frankincense).